Consider the following 460-residue polypeptide: Xyloglucan 6-xylosyltransferase 1 (460 aa).

Topologically, residues 1 to 20 (MIEKCIGAHRFRRLQRFMRQ) are cytoplasmic. Residues 21–40 (GKVTILCLVLTVIVLRGTIG) traverse the membrane as a helical; Signal-anchor for type II membrane protein segment. Residues 41–460 (AGKFGTPEKD…KAAKLSTTTT (420 aa)) lie on the Lumenal side of the membrane. UDP-alpha-D-xylose is bound by residues Gly156 and 227-229 (DSD). Asp227 and Asp229 together coordinate Mn(2+). His346 provides a ligand contact to substrate. UDP-alpha-D-xylose-binding residues include His377, Gly380, and Lys382. Residue His377 participates in Mn(2+) binding. Substrate contacts are provided by residues Lys382 and 389-390 (DY). A glycan (N-linked (GlcNAc...) asparagine) is linked at Asn431.

It belongs to the glycosyltransferase 34 family. As to quaternary structure, forms homodimer. Interacts with XXT2. Requires Mn(2+) as cofactor.

The protein localises to the golgi apparatus membrane. The catalysed reaction is Transfers an alpha-D-xylosyl residue from UDP-D-xylose to a glucose residue in xyloglucan, forming an alpha-(1-&gt;6)-D-xylosyl-D-glucose linkage.. The protein operates within protein modification; protein glycosylation. Xylosyltransferase specific to UDP-D-xylose that accepts both cellopentaose and cellohexaose as substrates, with a better use of cellohexaose, to produce xyloglucan. Adds preferentially the first xylosyl residue to the fourth glucosyl residue from the reducing end of both acceptors. Transfer one xylose mainly to the second glucose residue from the non-reducing end. The acceptor should have a minimum of four glucose residues. This Arabidopsis thaliana (Mouse-ear cress) protein is Xyloglucan 6-xylosyltransferase 1.